Consider the following 358-residue polypeptide: Gentisate 1,2-dioxygenase (358 aa).

The region spanning 99–165 is the Cupin type-2 domain; it reads QYLGPREVAP…VTDEPMAWLD (67 aa). Residues 185–215 form a disordered region; the sequence is DELSTRETPERSRGERLWGHPGLRPIGRPDQ. Residues 187-202 show a composition bias toward basic and acidic residues; it reads LSTRETPERSRGERLW.

It belongs to the gentisate 1,2-dioxygenase family.

It carries out the reaction 2,5-dihydroxybenzoate + O2 = 3-maleylpyruvate + H(+). Functionally, involved in the degradation of salicylate via a pathway involving coenzyme A derivative. Catalyzes the oxygen-dependent ring fission of gentisate between the carboxyl and proximal hydroxyl groups at positions 1 and 2 of the aromatic ring to form maleylpyruvate. The substrate specificity is strong, since salicylate, catechol, protocatechuic acid, homogenetisate, 2,3-dihydroxybenzoate or 5-aminosalicylate cannot substitute for gentisate in the ring cleavage reaction. The polypeptide is Gentisate 1,2-dioxygenase (Streptomyces sp).